A 226-amino-acid chain; its full sequence is ATP-dependent dethiobiotin synthetase BioD (226 aa).

13–18 (DVGKTL) contributes to the ATP binding site. Residue Thr-17 participates in Mg(2+) binding. Residue Lys-38 is part of the active site. ATP-binding positions include Asp-55, 117-120 (EGAG), 177-178 (NR), 206-208 (PFV), and Glu-213. Mg(2+)-binding residues include Asp-55 and Glu-117.

The protein belongs to the dethiobiotin synthetase family. Homodimer. Requires Mg(2+) as cofactor.

It is found in the cytoplasm. The enzyme catalyses (7R,8S)-7,8-diammoniononanoate + CO2 + ATP = (4R,5S)-dethiobiotin + ADP + phosphate + 3 H(+). It functions in the pathway cofactor biosynthesis; biotin biosynthesis; biotin from 7,8-diaminononanoate: step 1/2. Catalyzes a mechanistically unusual reaction, the ATP-dependent insertion of CO2 between the N7 and N8 nitrogen atoms of 7,8-diaminopelargonic acid (DAPA, also called 7,8-diammoniononanoate) to form a ureido ring. This chain is ATP-dependent dethiobiotin synthetase BioD, found in Aeromonas hydrophila subsp. hydrophila (strain ATCC 7966 / DSM 30187 / BCRC 13018 / CCUG 14551 / JCM 1027 / KCTC 2358 / NCIMB 9240 / NCTC 8049).